The chain runs to 612 residues: MFS siderochrome iron transporter B (612 aa).

Over 1-86 (MLHVLSVGPS…GAQAGVKKIE (86 aa)) the chain is Cytoplasmic. The interval 55–78 (DKEAAHAPANAETNNEEANPSDGA) is disordered. Over residues 60 to 72 (HAPANAETNNEEA) the composition is skewed to low complexity. Residues 87-104 (AVTLSWTRGTAIWFLTLV) form a helical membrane-spanning segment. Residues 105 to 127 (NDFRLSMYTSLNAYATSSFLGHS) lie on the Extracellular side of the membrane. The helical transmembrane segment at 128–148 (LLTVINIVSYVMGGSVYIPMA) threads the bilayer. The Cytoplasmic portion of the chain corresponds to 149 to 156 (KALDLWGR). Residues 157–177 (AEGFLLMTFFCILGLILLASS) form a helical membrane-spanning segment. Over 178-187 (QNLPTYCAGQ) the chain is Extracellular. A helical membrane pass occupies residues 188–208 (VFYKVGFGGLSYTWNVLAADV). Topologically, residues 209-215 (TNLRNRG) are cytoplasmic. The chain crosses the membrane as a helical span at residues 216-236 (LAFAFTSSPALISAFAGSKAA). The Extracellular portion of the chain corresponds to 237-246 (SDLLAHSTWR). The chain crosses the membrane as a helical span at residues 247–267 (WGFGMWAIILPVVALPIYGLL). The Cytoplasmic segment spans residues 268-302 (AYHLRQAEKKGVLVKETRDWSITPKTVWWAIMEFD). A helical membrane pass occupies residues 303-323 (LPGVLLFAGGFVIFLLPFTLA). Residues 324–334 (ATAPHGYQTDY) are Extracellular-facing. The helical transmembrane segment at 335 to 355 (IIAMITLGLALIIAFGFYEML) threads the bilayer. Over 356-370 (VAPVPFLNYKFLIDR) the chain is Cytoplasmic. A helical membrane pass occupies residues 371–393 (TVLGACLLDMTYQVSYYCYASYL). Over 394 to 409 (PSFLQVVYELDVATAG) the chain is Extracellular. The helical transmembrane segment at 410–430 (YVTNTFSVVSFVFLFFAGWLI) threads the bilayer. The Cytoplasmic segment spans residues 431–435 (RWTGR). A helical membrane pass occupies residues 436-456 (FKWILWVCVPLYIFGLGLMIH). Over 457 to 463 (FRQPGGY) the chain is Extracellular. Residues 464 to 484 (IGYIVMCEIFFSVAGSVFILC) form a helical membrane-spanning segment. The Cytoplasmic segment spans residues 485 to 498 (VQLAVLASVDHQHV). The chain crosses the membrane as a helical span at residues 499 to 519 (AAVLALLFVMGSIGGSIGSAI). Over 520–575 (CGAIWTSTFLSRLERNLPASAMPDLSLIYSSLPTQLSYPVGSATRTAIVEAYGYAQ) the chain is Extracellular. Residues 576–596 (ARMLIAGTAFMVLGFIWVGMM) traverse the membrane as a helical segment. At 597-612 (RNLNVKNMTQTKGNVV) the chain is on the cytoplasmic side.

Belongs to the major facilitator superfamily.

The protein resides in the cell tip. It localises to the cytoplasmic vesicle membrane. Its subcellular location is the cell membrane. Its function is as follows. Major facilitator transporter involved in triacetylfusarinine C (TAFC) uptake. Can also transport ferricrocin and coprogen, but not ferrichrysin. MirB plays a crucial role for virulence in a murine model of pulmonary aspergillosis, indicating that TAFC-mediated iron uptake plays a dominant role during infection. In Aspergillus fumigatus (strain ATCC MYA-4609 / CBS 101355 / FGSC A1100 / Af293) (Neosartorya fumigata), this protein is MFS siderochrome iron transporter B.